Here is a 1220-residue protein sequence, read N- to C-terminus: Myosin-2 (1220 aa).

Residues 1-12 (MMLSASPNTLAK) show a composition bias toward polar residues. Disordered regions lie at residues 1 to 54 (MMLS…ARRS) and 68 to 95 (QNGS…RKEK). Residues 20 to 33 (ESLRQKDECDRPKD) are compositionally biased toward basic and acidic residues. Positions 40–54 (SRPNSRARLPSARRS) are enriched in low complexity. Basic and acidic residues predominate over residues 82–95 (ESERKEEGVKRKEK). Residues 160 to 209 (KKKLRVWCRVSNGQWQLGKIQSTSADTSLVMLSTANVVKVSTEELFPANP) form the Myosin N-terminal SH3-like domain. The 667-residue stretch at 213–879 (EGVEDLIQLS…QIGIFEDRRK (667 aa)) folds into the Myosin motor domain. ATP contacts are provided by residues 304–311 (GESGAGKT) and 353–361 (NANSSRFGK). Actin-binding stretches follow at residues 638-672 (LIEK…KQHL) and 759-781 (LFKL…KPNS). IQ domains lie at 881–910 (VLQG…VTLV), 904–933 (MRKV…FHAD), and 942–971 (ELSA…QKEL). 2 disordered regions span residues 968-1007 (QKEL…MSDL) and 1075-1118 (SITG…NGNT). Polar residues-rich tracts occupy residues 997–1006 (PQVQPTSMSD) and 1098–1118 (TMST…NGNT). A coiled-coil region spans residues 1003 to 1071 (SMSDLQKRIL…MSLAAARKSL (69 aa)).

This sequence belongs to the TRAFAC class myosin-kinesin ATPase superfamily. Myosin family. Plant myosin class VIII subfamily. Homodimer. Expressed in flowers, leaves and roots.

The protein localises to the cell junction. It localises to the plasmodesma. The protein resides in the endosome. Functionally, myosin heavy chain that is required for the cell cycle-regulated transport of various organelles and proteins for their segregation. Functions by binding with its tail domain to receptor proteins on organelles and exerting force with its N-terminal motor domain against actin filaments, thereby transporting its cargo along polarized actin cables. Involved in endocytosis via its action in endosomal trafficking. The polypeptide is Myosin-2 (VIII-2) (Arabidopsis thaliana (Mouse-ear cress)).